A 376-amino-acid polypeptide reads, in one-letter code: Cysteine synthase 1 (376 aa).

A mitochondrion-targeting transit peptide spans 1-16; that stretch reads MFRHGVRTFATTSLRR. K79 is modified (N6-(pyridoxal phosphate)lysine). Pyridoxal 5'-phosphate is bound by residues N109, 215 to 219, and S314; that span reads GTGGT.

The protein belongs to the cysteine synthase/cystathionine beta-synthase family. Requires pyridoxal 5'-phosphate as cofactor.

It is found in the mitochondrion. The enzyme catalyses O-succinyl-L-serine + hydrogen sulfide = L-cysteine + succinate. The catalysed reaction is O-acetyl-L-serine + hydrogen sulfide = L-cysteine + acetate. Its pathway is amino-acid biosynthesis; L-cysteine biosynthesis; L-cysteine from L-serine: step 2/2. In terms of biological role, catalyzes the conversion of O-succinyl-L-serine into cysteine, the last step in the cysteine biosynthesis pathway. Can also use O-acetyl-L-serine. The sequence is that of Cysteine synthase 1 (cys-17) from Neurospora crassa (strain ATCC 24698 / 74-OR23-1A / CBS 708.71 / DSM 1257 / FGSC 987).